Reading from the N-terminus, the 1610-residue chain is NHS-like protein 1 (1610 aa).

Ser24 carries the post-translational modification Phosphoserine. Residues 145 to 169 (SPFCDDYQDEDEETDQKCSLSSSEE) form a disordered region. Ser198 and Ser328 each carry phosphoserine. The segment covering 433 to 448 (TAQSAGQRESKSSGSS) has biased composition (polar residues). Disordered regions lie at residues 433–477 (TAQS…HWNE) and 531–602 (PAHP…DAGS). Ser568 is modified (phosphoserine). Polar residues predominate over residues 578–594 (GYSTPTSNMSSCSLDQT). Ser639 is subject to Phosphoserine. Over residues 649–667 (QKNQGDRSNYQDKSLSRNI) the composition is skewed to polar residues. Disordered stretches follow at residues 649 to 693 (QKNQ…KKSS), 715 to 778 (SLPG…SVKS), 791 to 981 (TGMQ…PPPE), 997 to 1535 (PRPA…GEGE), and 1566 to 1610 (EGGL…SEES). Residues 715–730 (SLPGKSGSSPSQSPCS) are compositionally biased toward low complexity. Composition is skewed to polar residues over residues 740–760 (SRSQ…TPNV), 767–778 (TPSQSDTSSVKS), and 851–865 (SPSS…TPTA). Positions 895-928 (SLISSVSISSSSTSLSSSTSTEGSGTMKKLDPAV) are enriched in low complexity. Composition is skewed to pro residues over residues 929-946 (GSPP…PFPC) and 970-981 (PHSPVFPPPPPE). The segment covering 1001-1011 (LSPILPDSPVS) has biased composition (low complexity). Positions 1012–1031 (LPLPPPLLPSSEPPPAPPLD) are enriched in pro residues. The span at 1041 to 1053 (PFTNSGQPESSRG) shows a compositional bias: polar residues. Ser1089 is modified (phosphoserine). Over residues 1122–1153 (SRNSTNEMESESQPASVTSSLPTPAKSSSQGD) the composition is skewed to polar residues. Residue Ser1167 is modified to Phosphoserine. The segment covering 1180–1193 (PSPSTTPLPDSSPS) has biased composition (low complexity). Ser1233 is modified (phosphoserine). 2 stretches are compositionally biased toward basic and acidic residues: residues 1240 to 1249 (GSVHSREAKE) and 1373 to 1383 (GRRDSDDDHSR). 2 positions are modified to phosphoserine: Ser1386 and Ser1388. Thr1392 carries the phosphothreonine modification. Positions 1405-1422 (QVGSIQRSIRKSSTSSDN) are enriched in polar residues. Residues 1447-1460 (KNTDPRFQRSRSEP) are compositionally biased toward basic and acidic residues. 2 stretches are compositionally biased toward low complexity: residues 1461-1474 (SPDA…CSPS) and 1504-1516 (SRTP…SRYS).

This sequence belongs to the NHS family. In terms of tissue distribution, widely expressed. Expressed in adult and fetal brain, fetal eyes, adult lens, kidney, liver and intestine.

The polypeptide is NHS-like protein 1 (NHSL1) (Homo sapiens (Human)).